Consider the following 559-residue polypeptide: Apolipoprotein N-acyltransferase 2 (559 aa).

A run of 6 helical transmembrane segments spans residues 27-47 (LAGS…GFLL), 53-73 (HVAC…SFWL), 86-106 (ASTV…ACIL), 114-134 (ACAF…GILA), 153-173 (IADI…NACV), and 187-207 (VPVF…SLYG). The 287-residue stretch at 221–507 (LALAIVQQNA…SAVLHVPVYP (287 aa)) folds into the CN hydrolase domain. Residue Glu288 is the Proton acceptor of the active site. Lys358 is an active-site residue. Cys416 (nucleophile) is an active-site residue. A helical transmembrane segment spans residues 519-539 (WVIVLCALIFFAEGVRMAVHT).

Belongs to the CN hydrolase family. Apolipoprotein N-acyltransferase subfamily.

The protein resides in the cell inner membrane. The enzyme catalyses N-terminal S-1,2-diacyl-sn-glyceryl-L-cysteinyl-[lipoprotein] + a glycerophospholipid = N-acyl-S-1,2-diacyl-sn-glyceryl-L-cysteinyl-[lipoprotein] + a 2-acyl-sn-glycero-3-phospholipid + H(+). The protein operates within protein modification; lipoprotein biosynthesis (N-acyl transfer). In terms of biological role, catalyzes the phospholipid dependent N-acylation of the N-terminal cysteine of apolipoprotein, the last step in lipoprotein maturation. In Treponema pallidum (strain Nichols), this protein is Apolipoprotein N-acyltransferase 2.